The chain runs to 458 residues: Histone acetyltransferase KAT8 (458 aa).

Composition is skewed to low complexity over residues 1–17 (MAAQ…TSGT) and 25–35 (PGENAAVEGPA). A disordered region spans residues 1–52 (MAAQGATAAVAATTSGTVGEGEPGPGENAAVEGPARSPGRVSPPTPARGEPE). The residue at position 2 (Ala2) is an N-acetylalanine. Phosphoserine is present on residues Ser37 and Ser42. Residues 55 to 110 (VEIGETYLCRRPDSTWHSAEVIQSRVNDQEGREEFYVHYVGFNRRLDEWVDKNRLA) form the Tudor-knot domain. Position 113 is an N6-acetyllysine (Lys113). The short motif at 140–149 (RNQKRKHDEI) is the Nuclear localization signal element. One can recognise an MYST-type HAT domain in the interval 174 to 447 (TKVKYVDKIH…VDSVCLKWAP (274 aa)). Residues 174-458 (TKVKYVDKIH…KHKQVKLSKK (285 aa)) are sufficient for interaction with KANSL1. A C2HC MYST-type zinc finger spans residues 207 to 232 (LWLCEYCLKYMKFEKSYRFHLGQCQW). Positions 210, 213, 226, and 230 each coordinate Zn(2+). Lys274 carries the N6-acetyllysine modification. Acetyl-CoA-binding residues include Ile317, Thr319, Arg325, Arg326, Gly327, Gly329, and Lys330. The residue at position 348 (Ser348) is a Phosphoserine. Residue Glu350 is the Proton donor/acceptor of the active site. Positions 354, 363, 408, and 432 each coordinate acetyl-CoA.

Belongs to the MYST (SAS/MOZ) family. Component of a multisubunit histone acetyltransferase complex (MSL) at least composed of the MOF/KAT8, MSL1/hampin, MSL2L1 and MSL3L1. Component of the NSL complex at least composed of MOF/KAT8, KANSL1, KANSL2, KANSL3, MCRS1, PHF20, OGT1/OGT, WDR5 and HCFC1. Component of some MLL1/MLL complex, at least composed of the core components KMT2A/MLL1, ASH2L, HCFC1, WDR5 and RBBP5, as well as the facultative components BACC1, CHD8, E2F6, HSP70, INO80C, KANSL1, LAS1L, MAX, MCRS1, MGA, MOF/KAT8, PELP1, PHF20, PRP31, RING2, RUVB1/TIP49A, RUVB2/TIP49B, SENP3, TAF1, TAF4, TAF6, TAF7, TAF9 and TEX10. Interacts with the chromodomain of MORF4L1/MRG15. Interacts with ATM (via its Tudor-knot domain); possibly regulating the activity of ATM. Interacts with NELFD. Post-translationally, acetylation at Lys-274 facilitates cognate substrate Lys-binding and acetylation. Although considered as an autoacetylation event, acetylation at Lys-274 probably takes place via a non-enzymatic process following acetyl-CoA-binding, which primes KAT8 for cognate protein-lysine acetylation. As to expression, during oocyte development, expressed in both oocytes and granulosa cells.

Its subcellular location is the nucleus. The protein localises to the chromosome. It localises to the mitochondrion. The catalysed reaction is L-lysyl-[histone] + acetyl-CoA = N(6)-acetyl-L-lysyl-[histone] + CoA + H(+). It catalyses the reaction L-lysyl-[protein] + acetyl-CoA = N(6)-acetyl-L-lysyl-[protein] + CoA + H(+). The enzyme catalyses propanoyl-CoA + L-lysyl-[protein] = N(6)-propanoyl-L-lysyl-[protein] + CoA + H(+). The acetyltransferase activity is inhibited by anacardic acid derivatives. Its function is as follows. Histone acetyltransferase that catalyzes histone H4 acetylation at 'Lys-5'- and 'Lys-8' (H4K5ac and H4K8ac) or 'Lys-16' (H4K16ac), depending on the context. Catalytic component of the MSL histone acetyltransferase complex, a multiprotein complex that mediates the majority of histone H4 acetylation at 'Lys-16' (H4K16ac), an epigenetic mark that prevents chromatin compaction. H4K16ac constitutes the only acetylation mark intergenerationally transmitted and regulates key biological processes, such as oogenesis, embryonic stem cell pluripotency, hematopoiesis or glucose metabolism. The MSL complex is required for chromosome stability and genome integrity by maintaining homeostatic levels of H4K16ac. The MSL complex is also involved in gene dosage by promoting up-regulation of genes expressed by the X chromosome. X up-regulation is required to compensate for autosomal biallelic expression. The MSL complex also participates in gene dosage compensation by promoting expression of Tsix non-coding RNA. As part of the NSL histone acetyltransferase complex, catalyzes histone H4 acetylation at 'Lys-5'- and 'Lys-8' (H4K5ac and H4K8ac) at transcription start sites and promotes transcription initiation. The NSL complex also acts as a regulator of gene expression in mitochondria: KAT8 associates with mitochondrial DNA and controls expression of respiratory genes in an acetyltransferase-dependent mechanism. Also functions as an acetyltransferase for non-histone targets, such as ALKBH5, COX17, IRF3, KDM1A/LSD1, LMNA, PAX7 or TP53/p53. Acts as an inhibitor of antiviral immunity by acetylating IRF3, preventing IRF3 recruitment to promoters. Acts as a regulator of asymmetric division in muscle stem cells by mediating acetylation of PAX7. As part of the NSL complex, acetylates TP53/p53 at 'Lys-120'. Acts as a regulator of epithelial-to-mesenchymal transition as part of the NSL complex by mediating acetylation of KDM1A/LSD1. The NSL complex is required for nuclear architecture maintenance by mediating acetylation of LMNA. Promotes mitochondrial integrity by catalyzing acetylation of COX17. In addition to protein acetyltransferase activity, able to mediate protein propionylation. The chain is Histone acetyltransferase KAT8 from Mus musculus (Mouse).